The chain runs to 240 residues: Enoyl-CoA delta isomerase 1, peroxisomal (240 aa).

The short motif at serine 238–leucine 240 is the Microbody targeting signal element.

Belongs to the enoyl-CoA hydratase/isomerase family.

It is found in the peroxisome. It carries out the reaction a (3Z)-enoyl-CoA = a 4-saturated (2E)-enoyl-CoA. It catalyses the reaction a (3E)-enoyl-CoA = a 4-saturated (2E)-enoyl-CoA. It functions in the pathway lipid metabolism; fatty acid beta-oxidation. Able to isomerize both 3-cis and 3-trans double bonds into the 2-trans form in a range of enoyl-CoA species. Essential for the beta oxidation of unsaturated fatty acids. The polypeptide is Enoyl-CoA delta isomerase 1, peroxisomal (Arabidopsis thaliana (Mouse-ear cress)).